The primary structure comprises 76 residues: Omega-conotoxin-like Ai6.3 (76 aa).

The first 22 residues, 1-22 (MKLTCLMIVAVLFLTAWTFVTA), serve as a signal peptide directing secretion. A propeptide spanning residues 23–50 (VPDSSNALENLYLKAHHEMNNPEDSELN) is cleaved from the precursor. Intrachain disulfides connect Cys-53–Cys-67, Cys-60–Cys-71, and Cys-66–Cys-75.

Belongs to the conotoxin O1 superfamily. In terms of tissue distribution, expressed by the venom duct.

It is found in the secreted. Functionally, omega-conotoxins act at presynaptic membranes, they bind and block voltage-gated calcium channels (Cav). The polypeptide is Omega-conotoxin-like Ai6.3 (Conus ammiralis (Admiral cone)).